The sequence spans 137 residues: MLVIILGIIGLLASSNLVSSSTSTRVGGHLPLTFDPPENELGYWCTYVESCRFCWDCEDGICTSRVWGNNSTSIVENDYVKYCEVSRWGNLCRYDVEEHIYHSMNCSDPKPWNPYKIARKEWKKNEHPRKDLKKDEF.

The first 20 residues, 1 to 20 (MLVIILGIIGLLASSNLVSS), serve as a signal peptide directing secretion. Asparagine 69, asparagine 70, and asparagine 105 each carry an N-linked (GlcNAc...) asparagine; by host glycan.

The protein belongs to the asfivirus MGF 110 family.

In terms of biological role, plays a role in virus cell tropism, and may be required for efficient virus replication in macrophages. The polypeptide is Protein MGF 110-7L (African swine fever virus (isolate Warthog/Namibia/Wart80/1980) (ASFV)).